Consider the following 642-residue polypeptide: Probable Xaa-Pro aminopeptidase P (642 aa).

Residues Asp439, Asp450, Glu548, and Glu562 each contribute to the Mn(2+) site.

Belongs to the peptidase M24B family. It depends on Mn(2+) as a cofactor.

It catalyses the reaction Release of any N-terminal amino acid, including proline, that is linked to proline, even from a dipeptide or tripeptide.. Its function is as follows. Catalyzes the removal of a penultimate prolyl residue from the N-termini of peptides. The chain is Probable Xaa-Pro aminopeptidase P (AMPP) from Laccaria bicolor (strain S238N-H82 / ATCC MYA-4686) (Bicoloured deceiver).